We begin with the raw amino-acid sequence, 367 residues long: Oleoyl-acyl carrier protein thioesterase 2, chloroplastic (367 aa).

A chloroplast-targeting transit peptide spans 1-48 (MLKLSCNVTDHIHNLFSNSRRIFVPVHRQTRPISCFQLKKEPLRAILS). Residues Asn-263, His-265, and Cys-300 contribute to the active site.

Belongs to the acyl-ACP thioesterase family.

The protein resides in the plastid. The protein localises to the chloroplast. It carries out the reaction (9Z)-octadecenoyl-[ACP] + H2O = (9Z)-octadecenoate + holo-[ACP] + H(+). Functionally, plays an essential role in chain termination during de novo fatty acid synthesis. Possesses high thioesterase activity for oleoyl-ACP versus other acyl-ACPs. The chain is Oleoyl-acyl carrier protein thioesterase 2, chloroplastic (FATA2) from Arabidopsis thaliana (Mouse-ear cress).